The chain runs to 64 residues: Large ribosomal subunit protein bL32 (64 aa).

The segment covering 1-16 (MAVPKHRKSKAKKRSR) has biased composition (basic residues). The interval 1–22 (MAVPKHRKSKAKKRSRQAANDK) is disordered.

It belongs to the bacterial ribosomal protein bL32 family.

This chain is Large ribosomal subunit protein bL32, found in Brachyspira hyodysenteriae (strain ATCC 49526 / WA1).